We begin with the raw amino-acid sequence, 161 residues long: UPF0178 protein BR1979/BS1330_I1973 (161 aa).

This sequence belongs to the UPF0178 family.

This Brucella suis biovar 1 (strain 1330) protein is UPF0178 protein BR1979/BS1330_I1973.